Reading from the N-terminus, the 318-residue chain is Transaldolase (318 aa).

Catalysis depends on Lys-132, which acts as the Schiff-base intermediate with substrate.

Belongs to the transaldolase family. Type 1 subfamily. Homodimer.

It localises to the cytoplasm. The enzyme catalyses D-sedoheptulose 7-phosphate + D-glyceraldehyde 3-phosphate = D-erythrose 4-phosphate + beta-D-fructose 6-phosphate. The protein operates within carbohydrate degradation; pentose phosphate pathway; D-glyceraldehyde 3-phosphate and beta-D-fructose 6-phosphate from D-ribose 5-phosphate and D-xylulose 5-phosphate (non-oxidative stage): step 2/3. Functionally, transaldolase is important for the balance of metabolites in the pentose-phosphate pathway. The polypeptide is Transaldolase (Shewanella putrefaciens (strain CN-32 / ATCC BAA-453)).